The sequence spans 1115 residues: Ubiquitin C-terminal hydrolase 13 (1115 aa).

The tract at residues 1-51 is disordered; that stretch reads MTMMTPPPLDQQEDEEMLVPNPDLVEGPQPMEVAQTDPAATAVENPPPEDP. The MATH domain maps to 53-178; sequence SLKFTWTIPM…NDTVLIEAEV (126 aa). The region spanning 198-522 is the USP domain; it reads VGLKNQGATC…NAYMLVYIRE (325 aa). Residue Cys-207 is the Nucleophile of the active site. The active-site Proton acceptor is His-454.

This sequence belongs to the peptidase C19 family. Interacts with SIC/RON3. Interacts with RGI1 and RGI2.

It catalyses the reaction Thiol-dependent hydrolysis of ester, thioester, amide, peptide and isopeptide bonds formed by the C-terminal Gly of ubiquitin (a 76-residue protein attached to proteins as an intracellular targeting signal).. Its function is as follows. Recognizes and hydrolyzes the peptide bond at the C-terminal Gly of ubiquitin. Involved in the processing of poly-ubiquitin precursors as well as that of ubiquitinated proteins. Positive regulator of root meristem development that, together with UBP12, prevents the ubiquitination and turnover of RGFR1 induced by the RGF1 hormone peptide, thus influencing PLT1 and PLT2 expression. This chain is Ubiquitin C-terminal hydrolase 13, found in Arabidopsis thaliana (Mouse-ear cress).